Reading from the N-terminus, the 1442-residue chain is Trafficking protein particle complex subunit 10 (1442 aa).

A compositionally biased stretch (polar residues) spans 1–23 (MSNVSPNSMNLNGSTSSTASVND). 6 disordered regions span residues 1–86 (MSNV…SSSS), 251–277 (TSSGNNKDKDNDNGGGSSGTGLSTSTK), 535–564 (GSSSSNTPSSTSATTAANGKNTPMPSNSGI), 1208–1238 (LSSSTSPSSATDSSNSNGNNNNNNNNNNHSK), 1316–1335 (QQQQKESNNDNGNEKQQKQQ), and 1422–1442 (LQDNNNNNNNSINSQTSTNKT). Low complexity predominate over residues 39–86 (SSSSASSISNSNSSSSNNLKPSTQPLSSSSTLNTPTQFSLQHSSSSSS). Low complexity predominate over residues 535 to 553 (GSSSSNTPSSTSATTAANG). Positions 554-564 (KNTPMPSNSGI) are enriched in polar residues. The segment covering 1208 to 1236 (LSSSTSPSSATDSSNSNGNNNNNNNNNNH) has biased composition (low complexity). Low complexity predominate over residues 1425-1442 (NNNNNNNSINSQTSTNKT).

It belongs to the TMEM1 family. As to quaternary structure, part of the multisubunit TRAPP (transport protein particle) complex.

Its subcellular location is the golgi apparatus. It localises to the cis-Golgi network. Its function is as follows. May play a role in vesicular transport from endoplasmic reticulum to Golgi. This chain is Trafficking protein particle complex subunit 10 (trapcc10-1), found in Dictyostelium discoideum (Social amoeba).